Reading from the N-terminus, the 90-residue chain is Small ribosomal subunit protein bS16 (90 aa).

The protein belongs to the bacterial ribosomal protein bS16 family.

The polypeptide is Small ribosomal subunit protein bS16 (Bacillus cytotoxicus (strain DSM 22905 / CIP 110041 / 391-98 / NVH 391-98)).